Here is a 127-residue protein sequence, read N- to C-terminus: Ribonuclease P protein component (127 aa).

This sequence belongs to the RnpA family. As to quaternary structure, consists of a catalytic RNA component (M1 or rnpB) and a protein subunit.

It catalyses the reaction Endonucleolytic cleavage of RNA, removing 5'-extranucleotides from tRNA precursor.. Its function is as follows. RNaseP catalyzes the removal of the 5'-leader sequence from pre-tRNA to produce the mature 5'-terminus. It can also cleave other RNA substrates such as 4.5S RNA. The protein component plays an auxiliary but essential role in vivo by binding to the 5'-leader sequence and broadening the substrate specificity of the ribozyme. In Rippkaea orientalis (strain PCC 8801 / RF-1) (Cyanothece sp. (strain PCC 8801)), this protein is Ribonuclease P protein component.